Reading from the N-terminus, the 249-residue chain is Coproheme decarboxylase (249 aa).

The active site involves Tyr145. Fe-coproporphyrin III-binding positions include Tyr145–Arg149 and His172.

The protein belongs to the ChdC family. Type 1 subfamily. It depends on Fe-coproporphyrin III as a cofactor.

The catalysed reaction is Fe-coproporphyrin III + 2 H2O2 + 2 H(+) = heme b + 2 CO2 + 4 H2O. The enzyme catalyses Fe-coproporphyrin III + H2O2 + H(+) = harderoheme III + CO2 + 2 H2O. It catalyses the reaction harderoheme III + H2O2 + H(+) = heme b + CO2 + 2 H2O. Its pathway is porphyrin-containing compound metabolism; protoheme biosynthesis. Its function is as follows. Involved in coproporphyrin-dependent heme b biosynthesis. Catalyzes the decarboxylation of Fe-coproporphyrin III (coproheme) to heme b (protoheme IX), the last step of the pathway. The reaction occurs in a stepwise manner with a three-propionate intermediate. The protein is Coproheme decarboxylase of Oceanobacillus iheyensis (strain DSM 14371 / CIP 107618 / JCM 11309 / KCTC 3954 / HTE831).